An 877-amino-acid chain; its full sequence is Polycomb protein Scm (877 aa).

Positions 1-57 are disordered; it reads MSGGRDSSTSSGSNSAAPGASTNATSSASASASSTSTSASPGSTTSPASTQRQRGRP. The span at 7 to 50 shows a compositional bias: low complexity; sequence SSTSSGSNSAAPGASTNATSSASASASSTSTSASPGSTTSPAST. An FCS-type zinc finger spans residues 54 to 93; the sequence is RGRPAKRATCTWCGEGKLPLQYVLPTQTGKKEFCSETCIA. Residues cysteine 63, cysteine 66, cysteine 87, and cysteine 91 each coordinate Zn(2+). MBT repeat units lie at residues 175–273 and 281–382; these read FDWD…LQPP and SSWP…MQPP. 3 disordered regions span residues 535–621, 652–692, and 713–735; these read NSRK…SNKV, TNTN…GGSA, and ANVK…ASLP. Phosphothreonine is present on threonine 546. A phosphoserine mark is found at serine 549 and serine 550. The span at 560–569 shows a compositional bias: polar residues; that stretch reads QSNSATTSPS. The residue at position 585 (serine 585) is a Phosphoserine. Low complexity predominate over residues 598-620; the sequence is ASQQNSNHSLNNNNNSASKSSNK. The span at 724–735 shows a compositional bias: low complexity; it reads SPTTLSSSASLP. Residues 806 to 876 form the SAM domain; the sequence is WTIEEVIQYI…KVNGRRNNLA (71 aa).

This sequence belongs to the SCM family. In terms of assembly, scm associates with the PRC1 core complex containing PSC, PC, PH and Sce/RING1. Forms homotypic and heterotypic interactions. Interacts with the SAM domain of ph-p via its SAM domain in vitro. Interacts with corto in vitro.

Its subcellular location is the nucleus. Polycomb group (PcG) protein. PcG proteins act by forming multiprotein complexes, which are required to maintain the transcriptionally repressive state of homeotic genes throughout development. PcG proteins are not required to initiate repression, but to maintain it during later stages of development. They probably act via the methylation of histones, rendering chromatin heritably changed in its expressibility. This is Polycomb protein Scm from Drosophila melanogaster (Fruit fly).